The chain runs to 543 residues: Chaperonin GroEL (543 aa).

Residues 30-33 (TLGP), Lys-51, 87-91 (DGTTT), Gly-415, 480-482 (DAA), and Asp-496 each bind ATP.

The protein belongs to the chaperonin (HSP60) family. Forms a cylinder of 14 subunits composed of two heptameric rings stacked back-to-back. Interacts with the co-chaperonin GroES.

The protein resides in the cytoplasm. It carries out the reaction ATP + H2O + a folded polypeptide = ADP + phosphate + an unfolded polypeptide.. In terms of biological role, together with its co-chaperonin GroES, plays an essential role in assisting protein folding. The GroEL-GroES system forms a nano-cage that allows encapsulation of the non-native substrate proteins and provides a physical environment optimized to promote and accelerate protein folding. In Hydrogenobaculum sp. (strain Y04AAS1), this protein is Chaperonin GroEL.